The following is a 131-amino-acid chain: uncharacterized protein (131 aa).

A Response regulatory domain is found at 8–124; it reads DILVVDDDPD…ELIRLVQQYC (117 aa). Position 57 is a 4-aspartylphosphate (D57).

This is an uncharacterized protein from Leptolyngbya boryana (Plectonema boryanum).